A 175-amino-acid polypeptide reads, in one-letter code: Co-chaperone protein HscB homolog (175 aa).

The J domain maps to 2–76; sequence NYFALFNLTP…RAEHMLELRG (75 aa).

It belongs to the HscB family. In terms of assembly, interacts with HscA and stimulates its ATPase activity.

In terms of biological role, co-chaperone involved in the maturation of iron-sulfur cluster-containing proteins. Seems to help targeting proteins to be folded toward HscA. This is Co-chaperone protein HscB homolog from Pseudoalteromonas atlantica (strain T6c / ATCC BAA-1087).